The primary structure comprises 982 residues: Nitrate reductase [NADPH] (982 aa).

Positions 1-128 are disordered; it reads MEAPALEQRQ…PPSTRLTTIL (128 aa). Over residues 10 to 20 the composition is skewed to basic and acidic residues; sequence QSLHDSSERQQ. Positions 63–110 are enriched in low complexity; the sequence is TASPTTTDFSSSSSDDNSTTLETSVNYSHSSNTNTNTSCPPSPITSSS. Cys-240 lines the Mo-molybdopterin pocket. The Cytochrome b5 heme-binding domain occupies 617–692; the sequence is TRLITLEELR…MPTYHIGTLT (76 aa). 2 residues coordinate heme: His-652 and His-675. An FAD-binding FR-type domain is found at 721–836; sequence KTWNSAILTF…KGPVGKFVYQ (116 aa). FAD contacts are provided by residues 776–779, 794–798, 810–812, Ser-860, and Thr-863; these read RAYT, LVKIY, and QMT. 952 to 961 provides a ligand contact to NADP(+); it reads MVLLCGPEGM.

The protein belongs to the nitrate reductase family. In terms of assembly, homodimer. FAD is required as a cofactor. The cofactor is heme. Requires Mo-molybdopterin as cofactor.

The catalysed reaction is nitrite + NADP(+) + H2O = nitrate + NADPH + H(+). Its pathway is nitrogen metabolism; nitrate reduction (assimilation). Nitrate reductase is a key enzyme involved in the first step of nitrate assimilation in plants, fungi and bacteria. The protein is Nitrate reductase [NADPH] (nit-3) of Neurospora crassa (strain ATCC 24698 / 74-OR23-1A / CBS 708.71 / DSM 1257 / FGSC 987).